Consider the following 620-residue polypeptide: Arginine--tRNA ligase (620 aa).

The 'HIGH' region motif lies at 147–157; sequence ANPTGPIHIGG.

Belongs to the class-I aminoacyl-tRNA synthetase family. In terms of assembly, monomer.

The protein localises to the cytoplasm. It carries out the reaction tRNA(Arg) + L-arginine + ATP = L-arginyl-tRNA(Arg) + AMP + diphosphate. In Bifidobacterium longum (strain DJO10A), this protein is Arginine--tRNA ligase.